The following is a 292-amino-acid chain: CCR4-NOT transcription complex subunit 8 (292 aa).

4 residues coordinate a divalent metal cation: Asp40, Glu42, Asp161, and Asp230.

This sequence belongs to the CAF1 family. Component of the CCR4-NOT complex; distinct complexes seem to exist that differ in the participation of probably mutually exclusive catalytic subunits; the complex contains two deadenylase subunits, CNOT6 or CNOT6L, and CNOT7 or CNOT8. In the complex interacts directly with CNOT1. Interacts with BTG1, BTG2 and TOB1. Interacts with BTG4.

The protein resides in the cytoplasm. Its subcellular location is the nucleus. The catalysed reaction is Exonucleolytic cleavage of poly(A) to 5'-AMP.. Functionally, has 3'-5' poly(A) exoribonuclease activity for synthetic poly(A) RNA substrate. Its function seems to be partially redundant with that of CNOT7. Catalytic component of the CCR4-NOT complex which is linked to various cellular processes including bulk mRNA degradation, miRNA-mediated repression, translational repression during translational initiation and general transcription regulation. During miRNA-mediated repression the complex also seems to act as translational repressor during translational initiation. Additional complex functions may be a consequence of its influence on mRNA expression. Associates with members of the BTG family such as TOB1 and BTG2 and is required for their anti-proliferative activity. The protein is CCR4-NOT transcription complex subunit 8 (Cnot8) of Mus musculus (Mouse).